Consider the following 127-residue polypeptide: Holotricin-2 (127 aa).

Positions 1–15 (MMKLVIALCLIGISA) are cleaved as a signal peptide. A propeptide spanning residues 16-55 (AYVVPVYYEIYPEDATFDEADIEPQLSPAELHHGSIRERR) is cleaved from the precursor. Positions 43 to 84 (PAELHHGSIRERRSLQPGAPSFPMPGSQLPTSVSGNVEKQGR) are disordered. Residues 45 to 56 (ELHHGSIRERRS) show a composition bias toward basic and acidic residues. Polar residues predominate over residues 70–84 (QLPTSVSGNVEKQGR).

This sequence belongs to the coleoptericin family. Hemolymph.

It is found in the secreted. Functionally, antibacterial activity against Gram-negative bacteria but not against Gram-positive bacteria. In Holotrichia diomphalia (Korean black chafer), this protein is Holotricin-2.